Consider the following 172-residue polypeptide: Translation initiation factor IF-3 (172 aa).

The protein belongs to the IF-3 family. In terms of assembly, monomer.

It localises to the cytoplasm. Functionally, IF-3 binds to the 30S ribosomal subunit and shifts the equilibrium between 70S ribosomes and their 50S and 30S subunits in favor of the free subunits, thus enhancing the availability of 30S subunits on which protein synthesis initiation begins. The chain is Translation initiation factor IF-3 from Lactobacillus johnsonii (strain CNCM I-12250 / La1 / NCC 533).